We begin with the raw amino-acid sequence, 351 residues long: Photosystem II D2 protein (351 aa).

The chain crosses the membrane as a helical span at residues 39–59; the sequence is TAYLAIGGWLTGTTFVTSWYT. Histidine 116 is a binding site for chlorophyll a. Residues 123–139 traverse the membrane as a helical segment; it reads GFMLRQFEISRLVGIRP. 2 residues coordinate pheophytin a: glutamine 128 and asparagine 141. The chain crosses the membrane as a helical span at residues 151–164; it reads VFVSVFLIYPLGQS. Residue histidine 196 participates in chlorophyll a binding. The chain crosses the membrane as a helical span at residues 206 to 226; that stretch reads GALLSAIHGVTVENTLYEDGE. Residues histidine 213 and phenylalanine 260 each coordinate a plastoquinone. Residue histidine 213 coordinates Fe cation. Histidine 267 serves as a coordination point for Fe cation. A helical membrane pass occupies residues 277–293; sequence GLWTSSIGIIGLALNLR.

This sequence belongs to the reaction center PufL/M/PsbA/D family. PSII is composed of 1 copy each of membrane proteins PsbA, PsbB, PsbC, PsbD, PsbE, PsbF, PsbH, PsbI, PsbJ, PsbK, PsbL, PsbM, PsbT, PsbX, PsbY, PsbZ, Psb30/Ycf12, peripheral proteins PsbO, CyanoQ (PsbQ), PsbU, PsbV and a large number of cofactors. It forms dimeric complexes. The D1/D2 heterodimer binds P680, chlorophylls that are the primary electron donor of PSII, and subsequent electron acceptors. It shares a non-heme iron and each subunit binds pheophytin, quinone, additional chlorophylls, carotenoids and lipids. There is also a Cl(-1) ion associated with D1 and D2, which is required for oxygen evolution. The PSII complex binds additional chlorophylls, carotenoids and specific lipids. is required as a cofactor.

It localises to the host cellular thylakoid membrane. It catalyses the reaction 2 a plastoquinone + 4 hnu + 2 H2O = 2 a plastoquinol + O2. Its function is as follows. Photosystem II (PSII) is a light-driven water:plastoquinone oxidoreductase that uses light energy to abstract electrons from H(2)O, generating O(2) and a proton gradient subsequently used for ATP formation. It consists of a core antenna complex that captures photons, and an electron transfer chain that converts photonic excitation into a charge separation. The D1/D2 (PsbA/PsbD) reaction center heterodimer binds P680, the primary electron donor of PSII as well as several subsequent electron acceptors. D2 is needed for assembly of a stable PSII complex. The sequence is that of Photosystem II D2 protein (psbD) from Synechococcus.